Consider the following 546-residue polypeptide: Chaperonin GroEL (546 aa).

Residues 30-33, Lys51, 87-91, Gly415, and Asp496 contribute to the ATP site; these read TLGP and DGTTT. Residues 526 to 546 are disordered; it reads PEPKSAPAGGMGGMGGMDGMM. Residues 534 to 546 show a composition bias toward gly residues; that stretch reads GGMGGMGGMDGMM.

This sequence belongs to the chaperonin (HSP60) family. As to quaternary structure, forms a cylinder of 14 subunits composed of two heptameric rings stacked back-to-back. Interacts with the co-chaperonin GroES.

Its subcellular location is the cytoplasm. It catalyses the reaction ATP + H2O + a folded polypeptide = ADP + phosphate + an unfolded polypeptide.. Together with its co-chaperonin GroES, plays an essential role in assisting protein folding. The GroEL-GroES system forms a nano-cage that allows encapsulation of the non-native substrate proteins and provides a physical environment optimized to promote and accelerate protein folding. The polypeptide is Chaperonin GroEL (Rhodopseudomonas palustris).